Consider the following 551-residue polypeptide: Alkaline nuclease (551 aa).

It belongs to the herpesviridae alkaline nuclease family. As to quaternary structure, interacts with major DNA-binding protein; this interaction increases the nuclease processivity of the alkaline exonuclease.

The protein resides in the host nucleus. It is found in the host cytoplasm. In terms of biological role, plays a role in processing non linear or branched viral DNA intermediates in order to promote the production of mature packaged unit-length linear progeny viral DNA molecules. Exhibits endonuclease and exonuclease activities and accepts both double-stranded and single-stranded DNA as substrate. Exonuclease digestion of DNA is in the 5'-&gt; 3' direction and the products are 5'-monophosphate nucleosides. Additionally, forms a recombinase with the major DNA-binding protein, which displays strand exchange activity. The protein is Alkaline nuclease of Varicella-zoster virus (strain Oka vaccine) (HHV-3).